The primary structure comprises 377 residues: 6-oxocyclohex-1-ene-1-carbonyl-CoA hydrolase (377 aa).

The protein belongs to the enoyl-CoA hydratase/isomerase family. As to quaternary structure, homotetramer.

It catalyses the reaction 6-oxocyclohex-1-ene-1-carbonyl-CoA + 2 H2O = 3-hydroxy-6-carboxyhexanoyl-CoA + H(+). It functions in the pathway aromatic compound metabolism; benzoyl-CoA degradation. Functionally, involved in the central benzoyl-CoA catabolism. Catalyzes the addition of one molecule of water to the double bond and the hydrolytic cleavage of C-C bond in the alicyclic ring, 6-oxocyclohex-1-ene-1-carbonyl-CoA (6-OCH-CoA) to yield 3-hydroxypimelyl-CoA. This chain is 6-oxocyclohex-1-ene-1-carbonyl-CoA hydrolase (oah), found in Thauera aromatica.